The following is a 170-amino-acid chain: Peptide deformylase (170 aa).

Positions 91 and 133 each coordinate Fe cation. Glu-134 is an active-site residue. His-137 contacts Fe cation.

Belongs to the polypeptide deformylase family. Fe(2+) is required as a cofactor.

It carries out the reaction N-terminal N-formyl-L-methionyl-[peptide] + H2O = N-terminal L-methionyl-[peptide] + formate. In terms of biological role, removes the formyl group from the N-terminal Met of newly synthesized proteins. Requires at least a dipeptide for an efficient rate of reaction. N-terminal L-methionine is a prerequisite for activity but the enzyme has broad specificity at other positions. In Yersinia pseudotuberculosis serotype O:1b (strain IP 31758), this protein is Peptide deformylase.